A 91-amino-acid chain; its full sequence is Probable Fe(2+)-trafficking protein (91 aa).

Belongs to the Fe(2+)-trafficking protein family.

Functionally, could be a mediator in iron transactions between iron acquisition and iron-requiring processes, such as synthesis and/or repair of Fe-S clusters in biosynthetic enzymes. In Burkholderia multivorans (strain ATCC 17616 / 249), this protein is Probable Fe(2+)-trafficking protein.